The chain runs to 163 residues: Inorganic pyrophosphatase (163 aa).

Positions 21, 35, and 47 each coordinate substrate. D57, D62, and D94 together coordinate Mg(2+). Position 131 (Y131) interacts with substrate.

Belongs to the PPase family. In terms of assembly, homohexamer. Mg(2+) is required as a cofactor.

It localises to the cytoplasm. It catalyses the reaction diphosphate + H2O = 2 phosphate + H(+). In terms of biological role, catalyzes the hydrolysis of inorganic pyrophosphate (PPi) forming two phosphate ions. The sequence is that of Inorganic pyrophosphatase from Halalkalibacterium halodurans (strain ATCC BAA-125 / DSM 18197 / FERM 7344 / JCM 9153 / C-125) (Bacillus halodurans).